The sequence spans 7096 residues: MESLVPGFNEKTHVQLSLPVLQVRDVLVRGFGDSVEEVLSEARQHLKDGTCGLVEVEKGVLPQLEQPYVFIKRSDARTAPHGHVMVELVAELEGIQYGRSGETLGVLVPHVGEIPVAYRKVLLRKNGNKGAGGHSYGADLKSFDLGDELGTDPYEDFQENWNTKHSSGVTRELMRELNGGAYTRYVDNNFCGPDGYPLECIKDLLARAGKASCTLSEQLDFIDTKRGVYCCREHEHEIAWYTERSEKSYELQTPFEIKLAKKFDTFNGECPNFVFPLNSIIKTIQPRVEKKKLDGFMGRIRSVYPVASPNECNQMCLSTLMKCDHCGETSWQTGDFVKATCEFCGTENLTKEGATTCGYLPQNAVVKIYCPACHNSEVGPEHSLAEYHNESGLKTILRKGGRTIAFGGCVFSYVGCHNKCAYWVPRASANIGCNHTGVVGEGSEGLNDNLLEILQKEKVNINIVGDFKLNEEIAIILASFSASTSAFVETVKGLDYKAFKQIVESCGNFKVTKGKAKKGAWNIGEQKSILSPLYAFASEAARVVRSIFSRTLETAQNSVRVLQKAAITILDGISQYSLRLIDAMMFTSDLATNNLVVMAYITGGVVQLTSQWLTNIFGTVYEKLKPVLDWLEEKFKEGVEFLRDGWEIVKFISTCACEIVGGQIVTCAKEIKESVQTFFKLVNKFLALCADSIIIGGAKLKALNLGETFVTHSKGLYRKCVKSREETGLLMPLKAPKEIIFLEGETLPTEVLTEEVVLKTGDLQPLEQPTSEAVEAPLVGTPVCINGLMLLEIKDTEKYCALAPNMMVTNNTFTLKGGAPTKVTFGDDTVIEVQGYKSVNITFELDERIDKVLNEKCSAYTVELGTEVNEFACVVADAVIKTLQPVSELLTPLGIDLDEWSMATYYLFDESGEFKLASHMYCSFYPPDEDEEEGDCEEEEFEPSTQYEYGTEDDYQGKPLEFGATSAALQPEEEQEEDWLDDDSQQTVGQQDGSEDNQTTTIQTIVEVQPQLEMELTPVVQTIEVNSFSGYLKLTDNVYIKNADIVEEAKKVKPTVVVNAANVYLKHGGGVAGALNKATNNAMQVESDDYIATNGPLKVGGSCVLSGHNLAKHCLHVVGPNVNKGEDIQLLKSAYENFNQHEVLLAPLLSAGIFGADPIHSLRVCVDTVRTNVYLAVFDKNLYDKLVSSFLEMKSEKQVEQKIAEIPKEEVKPFITESKPSVEQRKQDDKKIKACVEEVTTTLEETKFLTENLLLYIDINGNLHPDSATLVSDIDITFLKKDAPYIVGDVVQEGVLTAVVIPTKKAGGTTEMLAKALRKVPTDNYITTYPGQGLNGYTVEEAKTVLKKCKSAFYILPSIISNEKQEILGTVSWNLREMLAHAEETRKLMPVCVETKAIVSTIQRKYKGIKIQEGVVDYGARFYFYTSKTTVASLINTLNDLNETLVTMPLGYVTHGLNLEEAARYMRSLKVPATVSVSSPDAVTAYNGYLTSSSKTPEEHFIETISLAGSYKDWSYSGQSTQLGIEFLKRGDKSVYYTSNPTTFHLDGEVITFDNLKTLLSLREVRTIKVFTTVDNINLHTQVVDMSMTYGQQFGPTYLDGADVTKIKPHNSHEGKTFYVLPNDDTLRVEAFEYYHTTDPSFLGRYMSALNHTKKWKYPQVNGLTSIKWADNNCYLATALLTLQQIELKFNPPALQDAYYRARAGEAANFCALILAYCNKTVGELGDVRETMSYLFQHANLDSCKRVLNVVCKTCGQQQTTLKGVEAVMYMGTLSYEQFKKGVQIPCTCGKQATKYLVQQESPFVMMSAPPAQYELKHGTFTCASEYTGNYQCGHYKHITSKETLYCIDGALLTKSSEYKGPITDVFYKENSYTTTIKPVTYKLDGVVCTEIDPKLDNYYKKDNSYFTEQPIDLVPNQPYPNASFDNFKFVCDNIKFADDLNQLTGYKKPASRELKVTFFPDLNGDVVAIDYKHYTPSFKKGAKLLHKPIVWHVNNATNKATYKPNTWCIRCLWSTKPVETSNSFDVLKSEDAQGMDNLACEDLKPVSEEVVENPTIQKDVLECNVKTTEVVGDIILKPANNSLKITEEVGHTDLMAAYVDNSSLTIKKPNELSRVLGLKTLATHGLAAVNSVPWDTIANYAKPFLNKVVSTTTNIVTRCLNRVCTNYMPYFFTLLLQLCTFTRSTNSRIKASMPTTIAKNTVKSVGKFCLEASFNYLKSPNFSKLINIIIWFLLLSVCLGSLIYSTAALGVLMSNLGMPSYCTGYREGYLNSTNVTIATYCTGSIPCSVCLSGLDSLDTYPSLETIQITISSFKWDLTAFGLVAEWFLAYILFTRFFYVLGLAAIMQLFFSYFAVHFISNSWLMWLIINLVQMAPISAMVRMYIFFASFYYVWKSYVHVVDGCNSSTCMMCYKRNRATRVECTTIVNGVRRSFYVYANGGKGFCKLHNWNCVNCDTFCAGSTFISDEVARDLSLQFKRPINPTDQSSYIVDSVTVKNGSIHLYFDKAGQKTYERHSLSHFVNLDNLRANNTKGSLPINVIVFDGKSKCEESSAKSASVYYSQLMCQPILLLDQALVSDVGDSAEVAVKMFDAYVNTFSSTFNVPMEKLKTLVATAEAELAKNVSLDNVLSTFISAARQGFVDSDVETKDVVECLKLSHQSDIEVTGDSCNNYMLTYNKVENMTPRDLGACIDCSARHINAQVAKSHNIALIWNVKDFMSLSEQLRKQIRSAAKKNNLPFKLTCATTRQVVNVVTTKIALKGGKIVNNWLKQLIKVTLVFLFVAAIFYLITPVHVMSKHTDFSSEIIGYKAIDGGVTRDIASTDTCFANKHADFDTWFSQRGGSYTNDKACPLIAAVITREVGFVVPGLPGTILRTTNGDFLHFLPRVFSAVGNICYTPSKLIEYTDFATSACVLAAECTIFKDASGKPVPYCYDTNVLEGSVAYESLRPDTRYVLMDGSIIQFPNTYLEGSVRVVTTFDSEYCRHGTCERSEAGVCVSTSGRWVLNNDYYRSLPGVFCGVDAVNLLTNMFTPLIQPIGALDISASIVAGGIVAIVVTCLAYYFMRFRRAFGEYSHVVAFNTLLFLMSFTVLCLTPVYSFLPGVYSVIYLYLTFYLTNDVSFLAHIQWMVMFTPLVPFWITIAYIICISTKHFYWFFSNYLKRRVVFNGVSFSTFEEAALCTFLLNKEMYLKLRSDVLLPLTQYNRYLALYNKYKYFSGAMDTTSYREAACCHLAKALNDFSNSGSDVLYQPPQTSITSAVLQSGFRKMAFPSGKVEGCMVQVTCGTTTLNGLWLDDVVYCPRHVICTSEDMLNPNYEDLLIRKSNHNFLVQAGNVQLRVIGHSMQNCVLKLKVDTANPKTPKYKFVRIQPGQTFSVLACYNGSPSGVYQCAMRPNFTIKGSFLNGSCGSVGFNIDYDCVSFCYMHHMELPTGVHAGTDLEGNFYGPFVDRQTAQAAGTDTTITVNVLAWLYAAVINGDRWFLNRFTTTLNDFNLVAMKYNYEPLTQDHVDILGPLSAQTGIAVLDMCASLKELLQNGMNGRTILGSALLEDEFTPFDVVRQCSGVTFQSAVKRTIKGTHHWLLLTILTSLLVLVQSTQWSLFFFLYENAFLPFAMGIIAMSAFAMMFVKHKHAFLCLFLLPSLATVAYFNMVYMPASWVMRIMTWLDMVDTSLSGFKLKDCVMYASAVVLLILMTARTVYDDGARRVWTLMNVLTLVYKVYYGNALDQAISMWALIISVTSNYSGVVTTVMFLARGIVFMCVEYCPIFFITGNTLQCIMLVYCFLGYFCTCYFGLFCLLNRYFRLTLGVYDYLVSTQEFRYMNSQGLLPPKNSIDAFKLNIKLLGVGGKPCIKVATVQSKMSDVKCTSVVLLSVLQQLRVESSSKLWAQCVQLHNDILLAKDTTEAFEKMVSLLSVLLSMQGAVDINKLCEEMLDNRATLQAIASEFSSLPSYAAFATAQEAYEQAVANGDSEVVLKKLKKSLNVAKSEFDRDAAMQRKLEKMADQAMTQMYKQARSEDKRAKVTSAMQTMLFTMLRKLDNDALNNIINNARDGCVPLNIIPLTTAAKLMVVIPDYNTYKNTCDGTTFTYASALWEIQQVVDADSKIVQLSEISMDNSPNLAWPLIVTALRANSAVKLQNNELSPVALRQMSCAAGTTQTACTDDNALAYYNTTKGGRFVLALLSDLQDLKWARFPKSDGTGTIYTELEPPCRFVTDTPKGPKVKYLYFIKGLNNLNRGMVLGSLAATVRLQAGNATEVPANSTVLSFCAFAVDAAKAYKDYLASGGQPITNCVKMLCTHTGTGQAITVTPEANMDQESFGGASCCLYCRCHIDHPNPKGFCDLKGKYVQIPTTCANDPVGFTLKNTVCTVCGMWKGYGCSCDQLREPMLQSADAQSFLNRVCGVSAARLTPCGTGTSTDVVYRAFDIYNDKVAGFAKFLKTNCCRFQEKDEDDNLIDSYFVVKRHTFSNYQHEETIYNLLKDCPAVAKHDFFKFRIDGDMVPHISRQRLTKYTMADLVYALRHFDEGNCDTLKEILVTYNCCDDDYFNKKDWYDFVENPDILRVYANLGERVRQALLKTVQFCDAMRNAGIVGVLTLDNQDLNGNWYDFGDFIQTTPGSGVPVVDSYYSLLMPILTLTRALTAESHVDTDLTKPYIKWDLLKYDFTEERLKLFDRYFKYWDQTYHPNCVNCLDDRCILHCANFNVLFSTVFPPTSFGPLVRKIFVDGVPFVVSTGYHFRELGVVHNQDVNLHSSRLSFKELLVYAADPAMHAASGNLLLDKRTTCFSVAALTNNVAFQTVKPGNFNKDFYDFAVSKGFFKEGSSVELKHFFFAQDGNAAISDYDYYRYNLPTMCDIRQLLFVVEVVDKYFDCYDGGCINANQVIVNNLDKSAGFPFNKWGKARLYYDSMSYEDQDALFAYTKRNVIPTITQMNLKYAISAKNRARTVAGVSICSTMTNRQFHQKLLKSIAATRGATVVIGTSKFYGGWHNMLKTVYSDVENPHLMGWDYPKCDRAMPNMLRIMASLVLARKHTTCCSLSHRFYRLANECAQVLSEMVMCGGSLYVKPGGTSSGDATTAYANSVFNICQAVTANVNALLSTDGNKIADKYVRNLQHRLYECLYRNRDVDTDFVNEFYAYLRKHFSMMILSDDAVVCFNSTYASQGLVASIKNFKSVLYYQNNVFMSEAKCWTETDLTKGPHEFCSQHTMLVKQGDDYVYLPYPDPSRILGAGCFVDDIVKTDGTLMIERFVSLAIDAYPLTKHPNQEYADVFHLYLQYIRKLHDELTGHMLDMYSVMLTNDNTSRYWEPEFYEAMYTPHTVLQAVGACVLCNSQTSLRCGACIRRPFLCCKCCYDHVISTSHKLVLSVNPYVCNAPGCDVTDVTQLYLGGMSYYCKSHKPPISFPLCANGQVFGLYKNTCVGSDNVTDFNAIATCDWTNAGDYILANTCTERLKLFAAETLKATEETFKLSYGIATVREVLSDRELHLSWEVGKPRPPLNRNYVFTGYRVTKNSKVQIGEYTFEKGDYGDAVVYRGTTTYKLNVGDYFVLTSHTVMPLSAPTLVPQEHYVRITGLYPTLNISDEFSSNVANYQKVGMQKYSTLQGPPGTGKSHFAIGLALYYPSARIVYTACSHAAVDALCEKALKYLPIDKCSRIIPARARVECFDKFKVNSTLEQYVFCTVNALPETTADIVVFDEISMATNYDLSVVNARLRAKHYVYIGDPAQLPAPRTLLTKGTLEPEYFNSVCRLMKTIGPDMFLGTCRRCPAEIVDTVSALVYDNKLKAHKDKSAQCFKMFYKGVITHDVSSAINRPQIGVVREFLTRNPAWRKAVFISPYNSQNAVASKILGLPTQTVDSSQGSEYDYVIFTQTTETAHSCNVNRFNVAITRAKVGILCIMSDRDLYDKLQFTSLEIPRRNVATLQAENVTGLFKDCSKVITGLHPTQAPTHLSVDTKFKTEGLCVDIPGIPKDMTYRRLISMMGFKMNYQVNGYPNMFITREEAIRHVRAWIGFDVEGCHATREAVGTNLPLQLGFSTGVNLVAVPTGYVDTPNNTDFSRVSAKPPPGDQFKHLIPLMYKGLPWNVVRIKIVQMLSDTLKNLSDRVVFVLWAHGFELTSMKYFVKIGPERTCCLCDRRATCFSTASDTYACWHHSIGFDYVYNPFMIDVQQWGFTGNLQSNHDLYCQVHGNAHVASCDAIMTRCLAVHECFVKRVDWTIEYPIIGDELKINAACRKVQHMVVKAALLADKFPVLHDIGNPKAIKCVPQADVEWKFYDAQPCSDKAYKIEELFYSYATHSDKFTDGVCLFWNCNVDRYPANSIVCRFDTRVLSNLNLPGCDGGSLYVNKHAFHTPAFDKSAFVNLKQLPFFYYSDSPCESHGKQVVSDIDYVPLKSATCITRCNLGGAVCRHHANEYRLYLDAYNMMISAGFSLWVYKQFDTYNLWNTFTRLQSLENVAFNVVNKGHFDGQQGEVPVSIINNTVYTKVDGVDVELFENKTTLPVNVAFELWAKRNIKPVPEVKILNNLGVDIAANTVIWDYKRDAPAHISTIGVCSMTDIAKKPTETICAPLTVFFDGRVDGQVDLFRNARNGVLITEGSVKGLQPSVGPKQASLNGVTLIGEAVKTQFNYYKKVDGVVQQLPETYFTQSRNLQEFKPRSQMEIDFLELAMDEFIERYKLEGYAFEHIVYGDFSHSQLGGLHLLIGLAKRFKESPFELEDFIPMDSTVKNYFITDAQTGSSKCVCSVIDLLLDDFVEIIKSQDLSVVSKVVKVTIDYTEISFMLWCKDGHVETFYPKLQSSQAWQPGVAMPNLYKMQRMLLEKCDLQNYGDSATLPKGIMMNVAKYTQLCQYLNTLTLAVPYNMRVIHFGAGSDKGVAPGTAVLRQWLPTGTLLVDSDLNDFVSDADSTLIGDCATVHTANKWDLIISDMYDPKTKNVTKENDSKEGFFTYICGFIQQKLALGGSVAIKITEHSWNADLYKLMGHFAWWTAFVTNVNASSSEAFLIGCNYLGKPREQIDGYVMHANYIFWRNTNPIQLSSYSLFDMSKFPLKLRGTAVMSLKEGQINDMILSLLSKGRLIIRENNRVVISSDVLVNN.

Positions M1–D147 are disordered. The Cytoplasmic portion of the chain corresponds to M1 to K2225. A CoV Nsp1 globular domain is found at T12–G127. Residues E148–G179 enclose the BetaCoV Nsp1 C-terminal domain. The segment at Y154 to G180 is binding to 40s ribosome mRNA entry channel. Residues T183–K456 form the CoV Nsp2 N-terminal domain. Positions 200, 231, 234, 236, 323, 326, 341, 344, 370, 373, 382, and 416 each coordinate Zn(2+). Positions C200 to H236 are C2H2. Residues C323 to C344 form a C4 region. The C2HC stretch occupies residues C370–C416. Residues K458 to L688 enclose the CoV Nsp2 middle domain. LRR repeat units follow at residues R545–I569 and G697–K719. Residues A690–G818 enclose the CoV Nsp2 C-terminal domain. One can recognise a Ubiquitin-like 1 domain in the interval T821 to E929. The disordered stretch occupies residues P926–T999. Acidic residues-rich tracts occupy residues P927–E942 and P971–S984. Macro domains follow at residues V1025–K1194, K1231–I1359, and I1367–S1494. The region spanning T1496–S1561 is the DPUP domain. Residues V1565–V1620 enclose the Ubiquitin-like 2 domain. In terms of domain architecture, Peptidase C16 spans Y1634–N1898. The For PL-PRO activity role is filled by C1674. Residues L1680 to A1702 form an LRR 3 repeat. Zn(2+) is bound by residues C1752, C1755, C1787, and C1789. The C4-type zinc-finger motif lies at C1752–C1789. Catalysis depends on for PL-PRO activity residues H1835 and D1849. The 111-residue stretch at P1911–T2021 folds into the Nucleic acid-binding domain. The G2M domain maps to P2046–N2155. A helical transmembrane segment spans residues L2226 to S2246. Topologically, residues T2247–D2317 are lumenal. The 3Ecto domain occupies T2247 to D2317. 2 cysteine pairs are disulfide-bonded: C2263–C2291 and C2282–C2288. A helical membrane pass occupies residues L2318–F2338. Topologically, residues Y2339–K2775 are cytoplasmic. The segment at K2395–D2485 is Y1. Residues K2395–G2763 form the CoV Nsp3 Y domain. Zn(2+)-binding residues include H2399, C2404, C2409, C2412, C2445, H2448, C2452, and C2455. The segment at H2399–C2412 is ZF1. Residues C2445 to C2455 form a ZF2 region. Residues Q2486–V2580 form a Y2 region. Residues Q2486–G2763 form a coV-Y region. Residues G2581–D2662 are Y3. The tract at residues I2663–G2763 is Y4. The chain crosses the membrane as a helical span at residues V2776–M2796. The Lumenal portion of the chain corresponds to S2797–S3044. The chain crosses the membrane as a helical span at residues A3045–M3065. The Cytoplasmic segment spans residues R3066–S3099. A helical transmembrane segment spans residues F3100 to V3120. Residues S3121–Q3127 lie on the Lumenal side of the membrane. The chain crosses the membrane as a helical span at residues W3128 to I3148. Topologically, residues S3149–T3586 are cytoplasmic. Positions V3165–Q3263 constitute a Nsp4C domain. One copy of the LRR 4 repeat lies at L3185–R3206. A Peptidase C30 domain is found at S3264 to Q3569. K3268 is covalently cross-linked (Glycyl lysine isopeptide (Lys-Gly) (interchain with G-Cter in ubiquitin)). The active-site For 3CL-PRO activity is the H3304. K3353 is covalently cross-linked (Glycyl lysine isopeptide (Lys-Gly) (interchain with G-Cter in ubiquitin)). Catalysis depends on C3408, which acts as the Nucleophile; for 3CL-PRO activity. Residues I3587–Y3607 form a helical membrane-spanning segment. Residue E3608 is a topological domain, lumenal. A helical membrane pass occupies residues N3609 to V3629. Residues K3630–A3634 lie on the Cytoplasmic side of the membrane. The chain crosses the membrane as a helical span at residues F3635 to M3655. The Lumenal segment spans residues P3656 to S3673. Residues L3674–L3694 form a helical membrane-spanning segment. The Cytoplasmic segment spans residues M3695–Q3729. A helical membrane pass occupies residues A3730–T3750. Residues V3751 to C3778 lie on the Lumenal side of the membrane. The chain crosses the membrane as a helical span at residues I3779–L3799. Over L3800–N7096 the chain is Cytoplasmic. The RdRp Nsp7 cofactor domain occupies S3860–Q3942. Residues C3931–D4020 form a disordered region. 2 LRR repeats span residues L3935–T3959 and L3977–M4004. One can recognise a RdRp Nsp8 cofactor domain in the interval A3943–Q4140. The region spanning N4141–Q4253 is the Nsp9 ssRNA-binding domain. The 139-residue stretch at A4254 to Q4392 folds into the ExoN/MTase coactivator domain. 8 residues coordinate Zn(2+): C4327, C4330, H4336, C4343, C4370, C4373, C4381, and C4383. One can recognise a NiRAN domain in the interval F4399 to L4653. An LRR 7 repeat occupies A4591–Q4616. Residues N4601 and D4610 each contribute to the Mn(2+) site. The Nsp12 Interface domain occupies I4658–S4756. Positions 4687, 4693, 4698, 4702, and 4879 each coordinate Zn(2+). Residues R4757–Q5324 form the Nsp12 RNA-dependent RNA polymerase domain. The rdRp Fingers N-ter stretch occupies residues S4759 to A4973. The interval K4937–R4947 is interaction with RMP Remdesivir. Residues T4974–P5012 are rdRp Palm N-ter. The RdRp catalytic domain occupies P5004–G5166. The rdRp Fingers C-ter stretch occupies residues K5013–G5071. The Zn(2+) site is built by H5034, C5037, and C5038. The interval T5072–Q5207 is rdRp Palm C-ter. Catalysis depends on residues S5151, D5152, and D5153. The rdRp Thumb stretch occupies residues H5208 to Q5324. The CV ZBD domain occupies A5325–D5437. Residues C5329, C5332, C5340, C5343, C5350, C5353, H5357, H5363, C5374, C5379, C5396, and H5399 each coordinate Zn(2+). Residues T5552 to R5572 form an LRR 8 repeat. Positions N5581–L5762 constitute a (+)RNA virus helicase ATP-binding domain. Position 5606–5613 (G5606–S5613) interacts with a ribonucleoside 5'-triphosphate. One can recognise a (+)RNA virus helicase C-terminal domain in the interval G5763–L5932. Residues M5997–V6212 enclose the ExoN domain. Catalysis depends on residues D6015, E6017, and E6116. D6015, E6017, and E6116 together coordinate Mg(2+). Zn(2+) contacts are provided by C6132, C6135, C6151, H6154, H6182, C6186, and H6189. Residues H6193 and D6198 contribute to the active site. Residues H6193 and D6198 each coordinate Mg(2+). Position 6204 (C6204) interacts with Zn(2+). Positions Y6221–Q6452 constitute an N7-MTase domain. S-adenosyl-L-methionine is bound at residue D6256–A6262. Residues C6339–T6353 are gpppA-binding. Positions 6377, 6402, 6409, and 6412 each coordinate Zn(2+). The Nsp15 N-terminal oligomerization domain maps to S6453–R6513. The AV-Nsp11N/CoV-Nsp15M domain occupies N6514–Q6639. The region spanning K6656 to P6795 is the NendoU domain. H6686 functions as the Proton donor; for uridylate-specific endoribonuclease nsp15 activity in the catalytic mechanism. H6701 functions as the Proton acceptor; for uridylate-specific endoribonuclease nsp15 activity in the catalytic mechanism. Catalysis depends on K6741, which acts as the For uridylate-specific endoribonuclease nsp15 activity. Uracil is bound by residues K6741–S6745 and T6792–K6796. The Nidovirus-type SAM-dependent 2'-O-MTase domain occupies S6800–V7094. The LRR 9 repeat unit spans residues R6817–N6841. Residues K6844, D6928, K6968, and E7001 contribute to the active site.

It belongs to the coronaviruses polyprotein 1ab family. Interacts with host GIGYF2. As to quaternary structure, may form homohexamers. Interacts with N protein. In terms of assembly, 3CL-PRO exists as monomer and homodimer. Only the homodimer shows catalytic activity. Interacts with host FBXO22; this interaction promotes the proteasomal degradation of nsp5. Interacts with PL-PRO and nsp6. As to quaternary structure, forms homodimers. Interacts with host ZFYVE1 (DFCP1), which leads to ER and DMVs binding to lipid droplets. Interacts with host TBK1; this interaction decreases IRF3 phosphorylation by 57%, which leads to reduced IFN-beta production. In terms of assembly, interacts with nsp8 and nsp12 to form the replication-transcription complex (RTC): nsp12, nsp7, two subunits of nsp8, and up to two subunits of nsp13. Eight copies of nsp7 and eight copies of nsp8 assemble to form a heterohexadecamer dsRNA-encircling ring structure. Interacts with nsp7, nsp13 and nsp12 to form the replication-transcription complex (RTC): nsp12, nsp7, two subunits of nsp8, and up to two subunits of nsp13. Eight copies of nsp7 and eight copies of nsp8 assemble to form a heterohexadecamer dsRNA-encircling ring structure. As to quaternary structure, is a dimer. Interacts with NSP12. Interacts with host SND1. In terms of assembly, forms a dodecamer and interacts with nsp14 and nsp16; these interactions enhance nsp14 and nsp16 enzymatic activities. Interacts with nsp7 and nsp8 to form the replication-transcription complex (RTC): nsp12, nsp7, two subunits of nsp8, and up to two subunits of nsp13. Interacts with nsp9. As to quaternary structure, interacts with nsp8 to form the replication-transcription complex (RTC): nsp12, nsp7, two subunits of nsp8, and up to two subunits of nsp13. Interacts with host TBK1; this interaction inhibits TBK1 phosphorylation and decreases by 75% IRF3 phosphorylation, which leads to reduced IFN-beta production. In terms of assembly, interacts (via N-terminus) with DDX1. Interacts with nsp10. Homohexamer. As to quaternary structure, interacts with nsp10. Mn(2+) serves as cofactor. It depends on Mg(2+) as a cofactor. In terms of processing, specific enzymatic cleavages in vivo by its own proteases yield mature proteins. 3CL-PRO and PL-PRO proteinases are autocatalytically processed.

It localises to the host cytoplasm. The protein localises to the host endosome. The protein resides in the host endoplasmic reticulum membrane. Its subcellular location is the host Golgi apparatus. It is found in the host nucleus. It localises to the host perinuclear region. The protein localises to the host endoplasmic reticulum. The protein resides in the host endoplasmic reticulum-Golgi intermediate compartment. It catalyses the reaction RNA(n) + a ribonucleoside 5'-triphosphate = RNA(n+1) + diphosphate. The catalysed reaction is ATP + H2O = ADP + phosphate + H(+). It carries out the reaction TSAVLQ-|-SGFRK-NH2 and SGVTFQ-|-GKFKK the two peptides corresponding to the two self-cleavage sites of the SARS 3C-like proteinase are the two most reactive peptide substrates. The enzyme exhibits a strong preference for substrates containing Gln at P1 position and Leu at P2 position.. The enzyme catalyses Thiol-dependent hydrolysis of ester, thioester, amide, peptide and isopeptide bonds formed by the C-terminal Gly of ubiquitin (a 76-residue protein attached to proteins as an intracellular targeting signal).. It catalyses the reaction a 5'-end (N(7)-methyl 5'-triphosphoguanosine)-ribonucleoside in mRNA + S-adenosyl-L-methionine = a 5'-end (N(7)-methyl 5'-triphosphoguanosine)-(2'-O-methyl-ribonucleoside) in mRNA + S-adenosyl-L-homocysteine + H(+). The catalysed reaction is uridylyl-uridylyl-ribonucleotide-RNA = a 3'-end uridylyl-2',3'-cyclophospho-uridine-RNA + a 5'-end dephospho-ribonucleoside-RNA. It carries out the reaction a 5'-end diphospho-ribonucleoside in mRNA + GTP + H(+) = a 5'-end (5'-triphosphoguanosine)-ribonucleoside in mRNA + diphosphate. The enzyme catalyses a 5'-end (5'-triphosphoguanosine)-ribonucleoside in mRNA + S-adenosyl-L-methionine = a 5'-end (N(7)-methyl 5'-triphosphoguanosine)-ribonucleoside in mRNA + S-adenosyl-L-homocysteine. With respect to regulation, inhibited in vitro by GRL-0617. Its activity is regulated as follows. Inhibited ex vivo by K22. It may shift NSP6 zippering activity towards the nuclear envelope, thereby impairing formation of the NSP6-compartment necessary for viral transcription/replication. Inhibited by Remdesivir antiviral drug (GS-5734). With respect to regulation, inhibited by Remdesivir antiviral drug (GS-5734) through non-obligate RNA chain termination. Its activity is regulated as follows. Inhibited by pyridone-containing alpha-ketoamides compounds 13a and 13b. In turn, alpha-ketoamide 13b (tert-butyl (1-((S)-1-(((S)-4-(benzylamino)-3,4-dioxo-1-((S)-2-oxopyrrolidin-3-yl)butan-2-yl)amino)-3-cyclopropyl-1-oxopropan-2-yl)-2-oxo-1,2-dihydropyridin-3-yl)carbamate) inhibits SARS-CoV-2 replication in human lung cells. Inhibited ex vivo by michael acceptor inhibitor N3. Inhibited ex vivo by compound 11a and 11b. In terms of biological role, multifunctional protein involved in the transcription and replication of viral RNAs. Contains the proteinases responsible for the cleavages of the polyprotein. Functionally, inhibits host translation by associating with the open head conformation of the 40S subunit. The C-terminus binds to and obstructs ribosomal mRNA entry tunnel. Thereby inhibits antiviral response triggered by innate immunity or interferons. The nsp1-40S ribosome complex further induces an endonucleolytic cleavage near the 5'UTR of host mRNAs, targeting them for degradation. This inhibits the integrated stress response (ISR) in the infected cell by preventing EIF2S1/eIF2-alpha phosphorylation upstream of stress granule formation and depletes host G3BP1. Viral mRNAs less susceptible to nsp1-mediated inhibition of translation, because of their 5'-end leader sequence. Its function is as follows. Enhances mRNA repression of the 4EHP-GYF2 complex in the host, thereby inhibiting the antiviral response and facilitating SARS-CoV-2 replication. Possibly acts in cooperation with nsp1, which induces ribosome stalling on host mRNA, triggering mRNA repression by the host 4EHP-GYF2 complex which is enhanced by nsp2. Responsible for the cleavages located at the N-terminus of the replicase polyprotein. Participates together with nsp4 in the assembly of virally-induced cytoplasmic double-membrane vesicles necessary for viral replication. Antagonizes innate immune induction of type I interferon by blocking the phosphorylation, dimerization and subsequent nuclear translocation of host IRF3. Also prevents host NF-kappa-B signaling. In addition, PL-PRO possesses a deubiquitinating/deISGylating activity and processes both 'Lys-48'- and 'Lys-63'-linked polyubiquitin chains from cellular substrates. Cleaves preferentially ISG15 from antiviral protein IFIH1 (MDA5), but not RIGI. Can play a role in host ADP-ribosylation by ADP-ribose. Plays a role in the formation and maintenance of double membrane vesicles (DMVs) replication organelles. DMVs are formed by nsp3 and nsp4, while nsp6 zippers ER membranes and connects to lipid droplets. In terms of biological role, plays a role in the formation and maintenance of double membrane vesicles (DMVs) replication organelles. DMVs are formed by nsp3 and nsp4, while nsp6 zippers ER membranes and connects to lipid droplets. Functionally, cleaves the C-terminus of replicase polyprotein at 11 sites. Recognizes substrates containing the core sequence [ILMVF]-Q-|-[SGACN]. Cleaves and inactivates human TRMT1, preventing tRNA guanine(26)-dimethylation of tRNAs. May cleave human NLRP1 in lung epithelial cells, thereby activating the NLRP1 inflammasome pathway. May cleave human GSDMD, triggering alternative GSDME-mediated epithelial cell death upon activation of the NLRP1 inflammasome, which may enhance the release interleukins 1B, 6, 16 and 18. Also able to bind an ADP-ribose-1''-phosphate (ADRP). Its function is as follows. Plays a role in the formation and maintenance of double membrane vesicles (DMVs) replication organelles. DMVs are formed by nsp3 and nsp4, while nsp6 zippers ER membranes and connects to lipid droplets. LDs are consumed during DMV formation. Binds to host TBK1 without affecting TBK1 phosphorylation; the interaction with TBK1 decreases IRF3 phosphorylation, which leads to reduced IFN-beta production. Plays a role in viral RNA synthesis. Forms a hexadecamer with nsp8 (8 subunits of each) that may participate in viral replication by acting as a primase. Alternatively, may synthesize substantially longer products than oligonucleotide primers. In terms of biological role, plays a role in viral RNA synthesis. Forms a hexadecamer with nsp7 (8 subunits of each) that may participate in viral replication by acting as a primase. Alternatively, may synthesize substantially longer products than oligonucleotide primers. Interacts with ribosome signal recognition particle RNA (SRP). Together with NSP9, suppress protein integration into the cell membrane, thereby disrupting host immune defenses. Functionally, forms a primer, NSP9-pU, which is utilized by the polymerase for the initiation of RNA chains. Interacts with ribosome signal recognition particle RNA (SRP). Together with NSP8, suppress protein integration into the cell membrane, thereby disrupting host immune defenses. Its function is as follows. Plays a pivotal role in viral transcription by stimulating both nsp14 3'-5' exoribonuclease and nsp16 2'-O-methyltransferase activities. Therefore plays an essential role in viral mRNAs cap methylation. RNA-directed RNA polymerase that catalyzes the transcription of viral genomic and subgenomic RNAs. Acts in complex with nsp7 and nsp8 to transcribe both the minus and positive strands of genomic RNA. The kinase-like NiRAN domain of NSP12 attaches one or more nucleotides to the amino terminus of NSP9, forming a covalent RNA-protein intermediate that serves as transcription/replication primer. Subgenomic RNAs (sgRNAs) are formed by discontinuous transcription: The polymerase has the ability to pause at transcription-regulating sequences (TRS) and jump to the leader TRS, resulting in a major deletion. This creates a series of subgenomic RNAs that are replicated, transcribed and translated. In addition, Nsp12 is a subunit of the viral RNA capping enzyme that catalyzes the RNA guanylyltransferase reaction for genomic and sub-genomic RNAs. Subsequently, the NiRAN domain transfers RNA to GDP, and forms the core cap structure GpppA-RNA. In terms of biological role, plays a role in viral RNA synthesis. Multi-functional protein with a zinc-binding domain in N-terminus displaying RNA and DNA duplex-unwinding activities with 5' to 3' polarity. Activity of helicase is dependent on magnesium. Binds to host TBK1 and inhibits TBK1 phosphorylation; the interaction with TBK1 decreases IRF3 phosphorylation, which leads to reduced IFN-beta production. Functionally, plays a role in viral RNA synthesis through two distinct activities. The N7-guanine methyltransferase activity plays a role in the formation of the cap structure GpppA-RNA. The proofreading exoribonuclease reduces the sensitivity of the virus to RNA mutagens during replication. This activity acts on both ssRNA and dsRNA in a 3'-5' direction. Its function is as follows. Plays a role in viral transcription/replication and prevents the simultaneous activation of host cell dsRNA sensors, such as MDA5/IFIH1, OAS, and PKR. Acts by degrading the 5'-polyuridines generated during replication of the poly(A) region of viral genomic and subgenomic RNAs. Catalyzes a two-step reaction in which a 2'3'-cyclic phosphate (2'3'-cP) is first generated by 2'-O transesterification, which is then hydrolyzed to a 3'-phosphate (3'-P). If not degraded, poly(U) RNA would hybridize with poly(A) RNA tails and activate host dsRNA sensors. May bind genomic dsRNA in association with the replication-transcription complex (RTC), and play a role in nsp12 discontinous transcription. Methyltransferase that mediates mRNA cap 2'-O-ribose methylation to the 5'-cap structure of viral mRNAs. N7-methyl guanosine cap is a prerequisite for binding of nsp16. Therefore, it plays an essential role in cap methylation of viral mRNAs, which is essential to evade the immune system, especially when restricted by human IFIT1 and IFIT3. May disrupt host mRNA splicing in nucleus by interacting with pre-mRNA Recognition Domains of the U1 and U2 snRNAs. The chain is Replicase polyprotein 1ab (rep) from Homo sapiens (Human).